A 766-amino-acid polypeptide reads, in one-letter code: AMP deaminase 3 (766 aa).

Phosphoserine occurs at positions 85 and 107. The disordered stretch occupies residues 89–114 (QMPTQQDWKGPPTASPAMSPATPLVP). The span at 99 to 110 (PPTASPAMSPAT) shows a compositional bias: low complexity. Zn(2+) is bound by residues H316 and H318. Residues H318 and 387-392 (KFNSKY) contribute to the substrate site. Residue H585 participates in Zn(2+) binding. Position 588 (E588) interacts with substrate. H607 serves as the catalytic Proton acceptor. Zn(2+) is bound at residue D662. Position 663 to 666 (663 to 666 (DPMQ)) interacts with substrate.

The protein belongs to the metallo-dependent hydrolases superfamily. Adenosine and AMP deaminases family. As to quaternary structure, homotetramer. It depends on Zn(2+) as a cofactor. Found in heart, lung brain, spleen, kidney and to a lesser extent in liver.

The catalysed reaction is AMP + H2O + H(+) = IMP + NH4(+). The protein operates within purine metabolism; IMP biosynthesis via salvage pathway; IMP from AMP: step 1/1. In terms of biological role, AMP deaminase plays a critical role in energy metabolism. The chain is AMP deaminase 3 from Mus musculus (Mouse).